The primary structure comprises 445 residues: Phosphoglucosamine mutase (445 aa).

Serine 102 serves as the catalytic Phosphoserine intermediate. Mg(2+) contacts are provided by serine 102, aspartate 241, aspartate 243, and aspartate 245. A Phosphoserine modification is found at serine 102.

This sequence belongs to the phosphohexose mutase family. The cofactor is Mg(2+). Post-translationally, activated by phosphorylation.

It carries out the reaction alpha-D-glucosamine 1-phosphate = D-glucosamine 6-phosphate. Catalyzes the conversion of glucosamine-6-phosphate to glucosamine-1-phosphate. The protein is Phosphoglucosamine mutase of Acinetobacter baumannii (strain ACICU).